We begin with the raw amino-acid sequence, 126 residues long: Glycine cleavage system H protein (126 aa).

The Lipoyl-binding domain occupies 22-104 (IATVGITAFA…YGRGWLFKVE (83 aa)). At lysine 63 the chain carries N6-lipoyllysine.

Belongs to the GcvH family. The glycine cleavage system is composed of four proteins: P, T, L and H. Requires (R)-lipoate as cofactor.

In terms of biological role, the glycine cleavage system catalyzes the degradation of glycine. The H protein shuttles the methylamine group of glycine from the P protein to the T protein. The chain is Glycine cleavage system H protein from Thermobifida fusca (strain YX).